Here is a 1015-residue protein sequence, read N- to C-terminus: Formate dehydrogenase, nitrate-inducible, major subunit (1015 aa).

The segment at residues 1 to 33 is a signal peptide (tat-type signal); that stretch reads MDVSRRQFFKICAGGMAGTTVAALGFAPKQALA. A 4Fe-4S Mo/W bis-MGD-type domain is found at 43–106; that stretch reads AKEIRNTCTY…GLLDYVNSEN (64 aa). The [4Fe-4S] cluster site is built by Cys50, Cys53, Cys57, and Cys92. Sec196 provides a ligand contact to Mo-bis(molybdopterin guanine dinucleotide). Position 196 (Sec196) is a non-standard amino acid, selenocysteine.

The protein belongs to the prokaryotic molybdopterin-containing oxidoreductase family. In terms of assembly, trimer of heterotrimers, consisting of subunits alpha, beta and gamma. The cofactor is Mo-bis(molybdopterin guanine dinucleotide). Requires [4Fe-4S] cluster as cofactor. Post-translationally, exported by the Tat system. The position of the signal peptide cleavage has not been experimentally proven.

The protein localises to the periplasm. It catalyses the reaction a quinone + formate + H(+) = a quinol + CO2. Functionally, formate dehydrogenase allows E.coli to use formate as major electron donor during anaerobic respiration, when nitrate is used as electron acceptor. The alpha subunit FdnG contains the formate oxidation site. Electrons are transferred from formate to menaquinone in the gamma subunit (FdnI), through the 4Fe-4S clusters in the beta subunit (FdnH). Formate dehydrogenase-N is part of a system that generates proton motive force, together with the dissimilatory nitrate reductase (Nar). This is Formate dehydrogenase, nitrate-inducible, major subunit (fdnG) from Escherichia coli (strain K12).